The following is a 350-amino-acid chain: Methionine import ATP-binding protein MetN 1 (350 aa).

Residues 12-251 enclose the ABC transporter domain; sequence IDLKNITVLF…PSREVTQDFV (240 aa). 48–55 serves as a coordination point for ATP; it reads GYSGAGKS.

Belongs to the ABC transporter superfamily. Methionine importer (TC 3.A.1.24) family. The complex is composed of two ATP-binding proteins (MetN), two transmembrane proteins (MetI) and a solute-binding protein (MetQ).

It localises to the cell membrane. It carries out the reaction L-methionine(out) + ATP + H2O = L-methionine(in) + ADP + phosphate + H(+). The enzyme catalyses D-methionine(out) + ATP + H2O = D-methionine(in) + ADP + phosphate + H(+). Part of the ABC transporter complex MetNIQ involved in methionine import. Responsible for energy coupling to the transport system. In Oenococcus oeni (strain ATCC BAA-331 / PSU-1), this protein is Methionine import ATP-binding protein MetN 1.